The following is an 84-amino-acid chain: Toluene-4-monooxygenase system, hydroxylase component subunit gamma (84 aa).

It belongs to the TmoB/XamoB family. The alkene monooxygenase multicomponent enzyme system is composed of an electron transfer component and a monooxygenase component interacting with the effector protein TmoD. The electron transfer component is composed of a ferredoxin reductase (TmoF) and a ferredoxin (TmoC), and the monooxygenase component is formed by a heterohexamer (dimer of heterotrimers) of two alpha subunits (TmoA), two beta subunits (TmoE) and two gamma subunits (TmoB).

It carries out the reaction toluene + NADH + O2 + H(+) = 4-methylphenol + NAD(+) + H2O. It functions in the pathway xenobiotic degradation; toluene degradation. Its activity is regulated as follows. Inhibited by Zn(2+) and Cu(2+). Component of the toluene-4-monooxygenase multicomponent enzyme system which catalyzes the O2- and NADH-dependent hydroxylation of toluene to form p-cresol. Also able to convert benzene to phenol, catechol, and 1,2,3-trihydroxybenzene by successive hydroxylations. The chain is Toluene-4-monooxygenase system, hydroxylase component subunit gamma from Ectopseudomonas mendocina (Pseudomonas mendocina).